Consider the following 372-residue polypeptide: Alanine dehydrogenase 1 (372 aa).

Histidine 94 is a catalytic residue. Residue 170–200 (TYVIFGGGVAATNAANVALGLNAKVIIIELN) coordinates NAD(+).

The protein belongs to the AlaDH/PNT family.

The catalysed reaction is L-alanine + NAD(+) + H2O = pyruvate + NH4(+) + NADH + H(+). It functions in the pathway amino-acid degradation; L-alanine degradation via dehydrogenase pathway; NH(3) and pyruvate from L-alanine: step 1/1. In terms of biological role, may play a role in cell wall synthesis as L-alanine is an important constituent of the peptidoglycan layer. This Staphylococcus aureus (strain MSSA476) protein is Alanine dehydrogenase 1 (ald1).